The sequence spans 652 residues: ATP-dependent zinc metalloprotease FtsH 2 (652 aa).

Topologically, residues 1 to 6 (MNKYRR) are cytoplasmic. A helical transmembrane segment spans residues 7 to 27 (GLALGALALAVFILIGVGISM). Over 28–108 (RATPQPVNLT…PAGNGAISAD (81 aa)) the chain is Extracellular. The helical transmembrane segment at 109–129 (LMLLLRILTIVAVGVVIFVLF) threads the bilayer. Residues 130–652 (RRFGPSSIGT…RAAKPQIDRT (523 aa)) lie on the Cytoplasmic side of the membrane. Position 200-207 (200-207 (GPPGTGKT)) interacts with ATP. H420 provides a ligand contact to Zn(2+). The active site involves E421. Residues H424 and D496 each coordinate Zn(2+).

In the central section; belongs to the AAA ATPase family. It in the C-terminal section; belongs to the peptidase M41 family. As to quaternary structure, homohexamer. The cofactor is Zn(2+).

It is found in the cell membrane. In terms of biological role, acts as a processive, ATP-dependent zinc metallopeptidase for both cytoplasmic and membrane proteins. Plays a role in the quality control of integral membrane proteins. This is ATP-dependent zinc metalloprotease FtsH 2 from Sphaerobacter thermophilus (strain ATCC 49802 / DSM 20745 / KCCM 41009 / NCIMB 13125 / S 6022).